The sequence spans 601 residues: Potassium-transporting ATPase potassium-binding subunit (601 aa).

12 helical membrane passes run 6-26 (IMLL…LGLF), 65-85 (SYAI…YAVQ), 136-156 (ALTG…FALI), 179-199 (LYIL…QGVI), 283-303 (FSNF…CFTF), 313-333 (GWAV…IVMT), 367-387 (FGIS…CGAV), 397-417 (MGGF…GGVG), 419-439 (GLYG…LMIG), 458-478 (SIAI…AVLV), 524-544 (MLAI…LAIA), and 566-586 (LFVA…YVPA).

The protein belongs to the KdpA family. The system is composed of three essential subunits: KdpA, KdpB and KdpC.

The protein resides in the cell inner membrane. In terms of biological role, part of the high-affinity ATP-driven potassium transport (or Kdp) system, which catalyzes the hydrolysis of ATP coupled with the electrogenic transport of potassium into the cytoplasm. This subunit binds the periplasmic potassium ions and delivers the ions to the membrane domain of KdpB through an intramembrane tunnel. This is Potassium-transporting ATPase potassium-binding subunit from Herminiimonas arsenicoxydans.